The following is a 572-amino-acid chain: Methionine--tRNA ligase (572 aa).

Residues 11-21 carry the 'HIGH' region motif; the sequence is PYINGIKHLGN. Positions 143, 146, 156, and 159 each coordinate Zn(2+). The 'KMSKS' region signature appears at 346 to 350; sequence QFSTS. An ATP-binding site is contributed by threonine 349.

It belongs to the class-I aminoacyl-tRNA synthetase family. MetG type 1 subfamily. As to quaternary structure, monomer. It depends on Zn(2+) as a cofactor.

The protein resides in the cytoplasm. It carries out the reaction tRNA(Met) + L-methionine + ATP = L-methionyl-tRNA(Met) + AMP + diphosphate. Its function is as follows. Is required not only for elongation of protein synthesis but also for the initiation of all mRNA translation through initiator tRNA(fMet) aminoacylation. This Paracoccus denitrificans (strain Pd 1222) protein is Methionine--tRNA ligase.